We begin with the raw amino-acid sequence, 572 residues long: Proline--tRNA ligase (572 aa).

This sequence belongs to the class-II aminoacyl-tRNA synthetase family. ProS type 1 subfamily. Homodimer.

It localises to the cytoplasm. The enzyme catalyses tRNA(Pro) + L-proline + ATP = L-prolyl-tRNA(Pro) + AMP + diphosphate. Functionally, catalyzes the attachment of proline to tRNA(Pro) in a two-step reaction: proline is first activated by ATP to form Pro-AMP and then transferred to the acceptor end of tRNA(Pro). As ProRS can inadvertently accommodate and process non-cognate amino acids such as alanine and cysteine, to avoid such errors it has two additional distinct editing activities against alanine. One activity is designated as 'pretransfer' editing and involves the tRNA(Pro)-independent hydrolysis of activated Ala-AMP. The other activity is designated 'posttransfer' editing and involves deacylation of mischarged Ala-tRNA(Pro). The misacylated Cys-tRNA(Pro) is not edited by ProRS. This is Proline--tRNA ligase from Erwinia tasmaniensis (strain DSM 17950 / CFBP 7177 / CIP 109463 / NCPPB 4357 / Et1/99).